Reading from the N-terminus, the 317-residue chain is L-lactate dehydrogenase 1 (317 aa).

NAD(+)-binding positions include Val-17, Asp-38, Lys-43, Tyr-69, and 83–84; that span reads GA. Residues Gln-86 and Arg-92 each coordinate substrate. Residues Ser-105, 122–124, and Ser-147 each bind NAD(+); that span reads ATN. 124–127 serves as a coordination point for substrate; sequence NPVD. 152–155 contributes to the substrate binding site; sequence DSAR. Catalysis depends on His-179, which acts as the Proton acceptor. Tyr-223 bears the Phosphotyrosine mark. Residue Thr-232 participates in substrate binding.

The protein belongs to the LDH/MDH superfamily. LDH family. In terms of assembly, homotetramer.

It is found in the cytoplasm. The enzyme catalyses (S)-lactate + NAD(+) = pyruvate + NADH + H(+). The protein operates within fermentation; pyruvate fermentation to lactate; (S)-lactate from pyruvate: step 1/1. In terms of biological role, catalyzes the conversion of lactate to pyruvate (Potential). Appears to be the primary factor that allows S.aureus growth during nitrosative stress in both aerobically and anaerobically cultured cells. This is L-lactate dehydrogenase 1 from Staphylococcus aureus (strain MRSA252).